Reading from the N-terminus, the 175-residue chain is Large ribosomal subunit protein uL6 (175 aa).

The protein belongs to the universal ribosomal protein uL6 family. Part of the 50S ribosomal subunit.

In terms of biological role, this protein binds to the 23S rRNA, and is important in its secondary structure. It is located near the subunit interface in the base of the L7/L12 stalk, and near the tRNA binding site of the peptidyltransferase center. The chain is Large ribosomal subunit protein uL6 from Xanthomonas axonopodis pv. citri (strain 306).